The sequence spans 404 residues: S-adenosylmethionine synthase (404 aa).

Histidine 17 is a binding site for ATP. Aspartate 19 lines the Mg(2+) pocket. Glutamate 45 serves as a coordination point for K(+). 2 residues coordinate L-methionine: glutamate 58 and glutamine 101. The tract at residues 101–111 (QSADINRGVDR) is flexible loop. ATP contacts are provided by residues 172–174 (DAK), 245–246 (RF), aspartate 254, 260–261 (RK), alanine 277, and lysine 281. Aspartate 254 lines the L-methionine pocket. Residue lysine 285 participates in L-methionine binding.

Belongs to the AdoMet synthase family. As to quaternary structure, homotetramer; dimer of dimers. Mg(2+) serves as cofactor. The cofactor is K(+).

It is found in the cytoplasm. It catalyses the reaction L-methionine + ATP + H2O = S-adenosyl-L-methionine + phosphate + diphosphate. The protein operates within amino-acid biosynthesis; S-adenosyl-L-methionine biosynthesis; S-adenosyl-L-methionine from L-methionine: step 1/1. In terms of biological role, catalyzes the formation of S-adenosylmethionine (AdoMet) from methionine and ATP. The overall synthetic reaction is composed of two sequential steps, AdoMet formation and the subsequent tripolyphosphate hydrolysis which occurs prior to release of AdoMet from the enzyme. The chain is S-adenosylmethionine synthase from Chlorobium luteolum (strain DSM 273 / BCRC 81028 / 2530) (Pelodictyon luteolum).